Here is a 135-residue protein sequence, read N- to C-terminus: Large ribosomal subunit protein uL18 (135 aa).

The segment at 1–23 is disordered; that stretch reads MAQTQADTAARKPVGQSVSATRR.

This sequence belongs to the universal ribosomal protein uL18 family. Part of the 50S ribosomal subunit; part of the 5S rRNA/L5/L18/L25 subcomplex. Contacts the 5S and 23S rRNAs.

This is one of the proteins that bind and probably mediate the attachment of the 5S RNA into the large ribosomal subunit, where it forms part of the central protuberance. This Mycobacterium marinum (strain ATCC BAA-535 / M) protein is Large ribosomal subunit protein uL18.